Reading from the N-terminus, the 648-residue chain is Serine/arginine repetitive matrix protein 3 (648 aa).

The interval 1–44 is disordered; the sequence is MSSTVNNGATGMPAPPDAANGFPQPGASSGSWPRAEEELRAAEP. The CWF21 domain maps to 55–98; that stretch reads LDHERKRRVELKCMELQEMMEEQGYSEEEIRQKVGTFRQMLMEK. The span at 99–109 shows a compositional bias: basic and acidic residues; the sequence is EGVLTREDRPG. Disordered regions lie at residues 99–139 and 154–648; these read EGVL…DGPV and YRTK…SGGF. Basic residues-rich tracts occupy residues 168-186, 199-211, and 219-243; these read PKKK…KKRR, LRKK…KHRR, and RRKR…RKRP. Low complexity-rich tracts occupy residues 257-276 and 289-317; these read SASS…GSPS and TGSQ…NGGS. Over residues 381–409 the composition is skewed to basic residues; it reads ARRRRRRRRRRRSRSSANAPRRRGRRRTK. 3 stretches are compositionally biased toward low complexity: residues 414 to 428, 461 to 471, and 493 to 502; these read RGSS…SSSD, RPASTSPSPGT, and SWSSSRSPSK. Basic and acidic residues predominate over residues 525-544; the sequence is LGRDKDSEGRARHAEAEAAR. A compositionally biased stretch (basic residues) spans 545–560; the sequence is TRRRSRSYSPIRKRRR. Residues 579–648 show a composition bias toward low complexity; the sequence is IPYYRPSPSS…SRSSSESGGF (70 aa).

The protein belongs to the CWC21 family.

In terms of biological role, may play a role in regulating breast cancer cell invasiveness. May be involved in RYBP-mediated breast cancer progression. The chain is Serine/arginine repetitive matrix protein 3 (Srrm3) from Mus musculus (Mouse).